A 102-amino-acid chain; its full sequence is Small ribosomal subunit protein uS10 (102 aa).

This sequence belongs to the universal ribosomal protein uS10 family. Part of the 30S ribosomal subunit.

Involved in the binding of tRNA to the ribosomes. The protein is Small ribosomal subunit protein uS10 of Methylobacterium radiotolerans (strain ATCC 27329 / DSM 1819 / JCM 2831 / NBRC 15690 / NCIMB 10815 / 0-1).